A 306-amino-acid polypeptide reads, in one-letter code: Elongation factor Ts (306 aa).

Positions 80-83 (TDFV) are involved in Mg(2+) ion dislocation from EF-Tu.

This sequence belongs to the EF-Ts family.

It localises to the cytoplasm. Its function is as follows. Associates with the EF-Tu.GDP complex and induces the exchange of GDP to GTP. It remains bound to the aminoacyl-tRNA.EF-Tu.GTP complex up to the GTP hydrolysis stage on the ribosome. The sequence is that of Elongation factor Ts from Clostridium kluyveri (strain NBRC 12016).